The following is a 322-amino-acid chain: Atrochrysone carboxyl ACP thioesterase nsrC (322 aa).

Zn(2+) is bound by residues H105, H107, D109, and H110. D109 acts as the Proton donor/acceptor in catalysis.

The protein belongs to the metallo-beta-lactamase superfamily. Requires Zn(2+) as cofactor.

The catalysed reaction is atrochrysone carboxyl-[ACP] + H2O = atrochrysone carboxylate + holo-[ACP] + H(+). The protein operates within secondary metabolite biosynthesis. Its function is as follows. Atrochrysone carboxyl ACP thioesterase; part of the gene cluster that mediates the biosynthesis of the tetrahydroxanthone dimer neosartorin, which exhibits antibacterial activity. The two different monomeric units appear to be synthesized by the same set of enzymes, among which the Baeyer-Villiger monooxygenase nsrF is the key enzyme for the divergence of the biosynthetic routes. The pathway begins with the synthesis of atrochrysone thioester by the polyketide synthase nsrB. The atrochrysone carboxyl ACP thioesterase nsrC then breaks the thioester bond and releases the atrochrysone carboxylic acid from AacuL. Atrochrysone carboxylic acid is decarboxylated by the decarboxylase nsrE, and oxidized by the anthrone oxygenase nsrD to yield emodin. Emodin is then reduced to emodin hydroquinone by the oxidoreductase nsrR. A-ring reduction by the short chain dehydrogenase nsrJ, dehydration by the scytalone dehydratase-like protein nsrI and probable spontaneous re-oxidation, results in overall deoxygenation to chrysophanol. The Baeyer-Villiger monooxygenase nsrF accepts chrysophanol as a substrate to insert one oxygen atom at two different positions to yield the precursors of both monomric units. NsrF is promiscuous/flexible in interacting with the 2 (non methylated and methylated) aromatic rings of chrysophanol, thus diverging the biosynthetic pathway at this point. After the hydrolysis of the lactones, methylesterification by the methyltransferase nsrG yields respectively moniliphenone and 2,2',6'-trihydroxy-4-methyl-6-methoxya-cyldiphenylmethanone. The next steps are the hydroxylation by the FAD-dependent monooxygenase nsrK, followed by isomerization by the monooxygenase nsrQ. The short chain dehydrogenase/reductase nsrO then catalyzes the C-5 ketoreduction to give the xanthone skeleton of blennolide C and 5-acetylblennolide A. The acetyltransferase nsrL has a strict substrate specificity and uses only blennolide A but not blennolide C to yield 5-acetylblennolide A as the single-acetylated product. In the final step of the biosynthesis, the heterodimerization of the 2 xanthones, blennolide C and 5-acetylblennolide A, is catalyzed by the cytochrome P450 monooxygenase nsrP. NsrP can utilize at least three different xanthones as its substrates to perform the dimerization reaction. This chain is Atrochrysone carboxyl ACP thioesterase nsrC, found in Aspergillus novofumigatus (strain IBT 16806).